The following is a 571-amino-acid chain: Coiled-coil domain-containing protein 22 homolog (571 aa).

Coiled-coil stretches lie at residues 406–434 (MMDL…SRTA) and 509–571 (CAEL…AHLR).

It belongs to the CCDC22 family.

The sequence is that of Coiled-coil domain-containing protein 22 homolog from Culex quinquefasciatus (Southern house mosquito).